The following is a 407-amino-acid chain: Eukaryotic initiation factor 4A-II (407 aa).

Residues 1–22 (MSGGSADYNREHGGPEGMDPDG) are disordered. The short motif at 33–61 (DNFDDMNLKESLLRGIYAYGFEKPSAIQQ) is the Q motif element. A Helicase ATP-binding domain is found at 64-235 (IIPCIKGYDV…KKFMRDPIRI (172 aa)). 77 to 84 (AQSGTGKT) lines the ATP pocket. Thr159 carries the post-translational modification Phosphothreonine. The DEAD box signature appears at 183-186 (DEAD). A Helicase C-terminal domain is found at 246–407 (GIKQFYINVE…EMPMNVADLI (162 aa)).

The protein belongs to the DEAD box helicase family. eIF4A subfamily. EIF4F is a multi-subunit complex, the composition of which varies with external and internal environmental conditions. It is composed of at least EIF4A, EIF4E and EIF4G1/EIFFG3. Interacts with EIF4E. May interact with NOM1.

The catalysed reaction is ATP + H2O = ADP + phosphate + H(+). Its function is as follows. ATP-dependent RNA helicase which is a subunit of the eIF4F complex involved in cap recognition and is required for mRNA binding to ribosome. In the current model of translation initiation, eIF4A unwinds RNA secondary structures in the 5'-UTR of mRNAs which is necessary to allow efficient binding of the small ribosomal subunit, and subsequent scanning for the initiator codon. This is Eukaryotic initiation factor 4A-II (EIF4A2) from Bos taurus (Bovine).